The following is a 208-amino-acid chain: Imidazole glycerol phosphate synthase subunit HisH (208 aa).

Residues 2–208 (NVTIVDYNSG…LKIIENFLNL (207 aa)) form the Glutamine amidotransferase type-1 domain. Catalysis depends on Cys-85, which acts as the Nucleophile. Residues His-190 and Glu-192 contribute to the active site.

Heterodimer of HisH and HisF.

The protein localises to the cytoplasm. It catalyses the reaction 5-[(5-phospho-1-deoxy-D-ribulos-1-ylimino)methylamino]-1-(5-phospho-beta-D-ribosyl)imidazole-4-carboxamide + L-glutamine = D-erythro-1-(imidazol-4-yl)glycerol 3-phosphate + 5-amino-1-(5-phospho-beta-D-ribosyl)imidazole-4-carboxamide + L-glutamate + H(+). The enzyme catalyses L-glutamine + H2O = L-glutamate + NH4(+). It functions in the pathway amino-acid biosynthesis; L-histidine biosynthesis; L-histidine from 5-phospho-alpha-D-ribose 1-diphosphate: step 5/9. In terms of biological role, IGPS catalyzes the conversion of PRFAR and glutamine to IGP, AICAR and glutamate. The HisH subunit catalyzes the hydrolysis of glutamine to glutamate and ammonia as part of the synthesis of IGP and AICAR. The resulting ammonia molecule is channeled to the active site of HisF. The polypeptide is Imidazole glycerol phosphate synthase subunit HisH (Pelagibacter ubique (strain HTCC1062)).